A 331-amino-acid chain; its full sequence is Cytosolic sulfotransferase 1 (331 aa).

Lys74–Trp79 provides a ligand contact to 3'-phosphoadenylyl sulfate. His143 serves as the catalytic Proton acceptor. 3'-phosphoadenylyl sulfate is bound by residues Arg165, Ser173, Tyr231, and Arg297 to Gly299.

It belongs to the sulfotransferase 1 family.

It is found in the cytoplasm. Functionally, sulfotransferase that utilizes 3'-phospho-5'-adenylyl sulfate (PAPS) as sulfonate donor. The sequence is that of Cytosolic sulfotransferase 1 (SOT1) from Arabidopsis thaliana (Mouse-ear cress).